The primary structure comprises 281 residues: Cell division protein DivIB (281 aa).

The disordered stretch occupies residues 1 to 36; that stretch reads MARKRITRRDPEEELSKFLRHEPGQGQETRKLSSQL. Over 1-46 the chain is Cytoplasmic; it reads MARKRITRRDPEEELSKFLRHEPGQGQETRKLSSQLTSLKKERRRG. A compositionally biased stretch (basic and acidic residues) spans 8–31; the sequence is RRDPEEELSKFLRHEPGQGQETRK. Residues 47–69 traverse the membrane as a helical segment; the sequence is LLTRLGSIMAVCLLAIAFLTYYV. At 70-281 the chain is on the extracellular side; sequence SPLADVSTVR…SAEKKAYGLS (212 aa). The POTRA domain maps to 73–144; sequence ADVSTVRVLG…NTLNMQVHER (72 aa).

This sequence belongs to the FtsQ/DivIB family. DivIB subfamily.

The protein localises to the cell membrane. In terms of biological role, cell division protein that may be involved in stabilizing or promoting the assembly of the division complex. This is Cell division protein DivIB from Lactobacillus delbrueckii subsp. bulgaricus (strain ATCC 11842 / DSM 20081 / BCRC 10696 / JCM 1002 / NBRC 13953 / NCIMB 11778 / NCTC 12712 / WDCM 00102 / Lb 14).